A 440-amino-acid chain; its full sequence is MAFALPSSLVSICDKSFIKPSSLTPSTLRFHKLSFIDQSLSNMYIPCAFFYPKVQQRLEDSKNSDELSHIAHLLQTSLSQTLVSYYPYAGKLKDNATVDCNDMGAEFLSVRIKCSMSEILDHPHASLAESIVLPKDLPWANNCEGGNLLVVQVSKFDCGGIAISVCFSHKIGDGCSLLNFLNDWSSVTRDHTTTTLVPSPRFVGDSVFSTKKYGSLITPQILSDLNECVQKRLIFPTDKLDALRAKVAEESGVKNPTRAEVVSALLFKCATKASSSMLPSKLVHFLNIRTMIKPRLPRNAIGNLSSIFSIEATNMQDMELPTLVRNLRKEVEVAYKKDQVEQNELILEVVESMREGKLPFENMDGYENVYTCSNLCKYPYYTVDFGWGRPERVCLGNGPSKNAFFLKDYKAGQGVEARVMLHKQQMSEFERNEELLEFIA.

Active-site proton acceptor residues include His169 and Asp384.

This sequence belongs to the plant acyltransferase family.

It catalyses the reaction vanillylamine + (6E)-8-methylnon-6-enoyl-CoA = capsaicin + CoA + H(+). The enzyme catalyses (6E)-8-methylnon-6-enoyl-CoA + 4-hydroxy-3-methoxy-benzenemethanol = capsiate + CoA. Functionally, involved in the biosynthesis of capsaicinoids and capsinoids natural products, pungent alkaloids synthesized from phenylpropanoid intermediates in the placental tissue of chili pepper fruit acting as repellant on herbivorous mammals and conferring spiciness to hot peppers. Catalyzes the biosynthesis of capsaicin, a pungent component, and of capsiate, a non-pungent component, from vanillylamine and vanillyl alcohol, respectively. Can transfer an acyl from 8-methylnon-6-enoyl-CoA to vanillylamine forming capsaicin and CoA. This Capsicum frutescens (Cayenne pepper) protein is Acyltransferase Pun1.